A 93-amino-acid chain; its full sequence is Integration host factor subunit beta (93 aa).

This sequence belongs to the bacterial histone-like protein family. As to quaternary structure, heterodimer of an alpha and a beta chain.

In terms of biological role, this protein is one of the two subunits of integration host factor, a specific DNA-binding protein that functions in genetic recombination as well as in transcriptional and translational control. The sequence is that of Integration host factor subunit beta (ihfB) from Cereibacter sphaeroides (strain ATCC 17023 / DSM 158 / JCM 6121 / CCUG 31486 / LMG 2827 / NBRC 12203 / NCIMB 8253 / ATH 2.4.1.) (Rhodobacter sphaeroides).